Consider the following 231-residue polypeptide: Protein OPG061 (231 aa).

It belongs to the orthopoxvirus OPG058 family.

Its subcellular location is the host nucleus. The protein localises to the host nucleolus. The chain is Protein OPG061 (OPG061) from Cynomys gunnisoni (Gunnison's prairie dog).